Here is a 347-residue protein sequence, read N- to C-terminus: 3-isopropylmalate dehydrogenase (347 aa).

Substrate-binding residues include Arg-94, Arg-104, Arg-128, and Asp-219. Positions 219, 243, and 247 each coordinate Mg(2+). 279–291 (GSAPDIAGQGKAD) contacts NAD(+).

This sequence belongs to the isocitrate and isopropylmalate dehydrogenases family. LeuB type 2 subfamily. Homodimer. Mg(2+) serves as cofactor. The cofactor is Mn(2+).

The protein localises to the cytoplasm. The catalysed reaction is (2R,3S)-3-isopropylmalate + NAD(+) = 4-methyl-2-oxopentanoate + CO2 + NADH. The protein operates within amino-acid biosynthesis; L-leucine biosynthesis; L-leucine from 3-methyl-2-oxobutanoate: step 3/4. In terms of biological role, catalyzes the oxidation of 3-carboxy-2-hydroxy-4-methylpentanoate (3-isopropylmalate) to 3-carboxy-4-methyl-2-oxopentanoate. The product decarboxylates to 4-methyl-2 oxopentanoate. This is 3-isopropylmalate dehydrogenase from Streptomyces griseus subsp. griseus (strain JCM 4626 / CBS 651.72 / NBRC 13350 / KCC S-0626 / ISP 5235).